The primary structure comprises 204 residues: Holliday junction branch migration complex subunit RuvA (204 aa).

Positions Met1 to Ser64 are domain I. Positions Ala65–Glu143 are domain II. The tract at residues Ser144–Thr155 is flexible linker. Positions Ser156–Leu204 are domain III.

This sequence belongs to the RuvA family. Homotetramer. Forms an RuvA(8)-RuvB(12)-Holliday junction (HJ) complex. HJ DNA is sandwiched between 2 RuvA tetramers; dsDNA enters through RuvA and exits via RuvB. An RuvB hexamer assembles on each DNA strand where it exits the tetramer. Each RuvB hexamer is contacted by two RuvA subunits (via domain III) on 2 adjacent RuvB subunits; this complex drives branch migration. In the full resolvosome a probable DNA-RuvA(4)-RuvB(12)-RuvC(2) complex forms which resolves the HJ.

The protein localises to the cytoplasm. Its function is as follows. The RuvA-RuvB-RuvC complex processes Holliday junction (HJ) DNA during genetic recombination and DNA repair, while the RuvA-RuvB complex plays an important role in the rescue of blocked DNA replication forks via replication fork reversal (RFR). RuvA specifically binds to HJ cruciform DNA, conferring on it an open structure. The RuvB hexamer acts as an ATP-dependent pump, pulling dsDNA into and through the RuvAB complex. HJ branch migration allows RuvC to scan DNA until it finds its consensus sequence, where it cleaves and resolves the cruciform DNA. This is Holliday junction branch migration complex subunit RuvA from Mannheimia succiniciproducens (strain KCTC 0769BP / MBEL55E).